Reading from the N-terminus, the 428-residue chain is Serine--tRNA ligase (428 aa).

Threonine 235 to glutamate 237 is an L-serine binding site. Arginine 266–glutamate 268 contributes to the ATP binding site. Glutamate 289 contributes to the L-serine binding site. Position 353–356 (glutamate 353–serine 356) interacts with ATP. Serine 389 serves as a coordination point for L-serine.

It belongs to the class-II aminoacyl-tRNA synthetase family. Type-1 seryl-tRNA synthetase subfamily. Homodimer. The tRNA molecule binds across the dimer.

Its subcellular location is the cytoplasm. It catalyses the reaction tRNA(Ser) + L-serine + ATP = L-seryl-tRNA(Ser) + AMP + diphosphate + H(+). The catalysed reaction is tRNA(Sec) + L-serine + ATP = L-seryl-tRNA(Sec) + AMP + diphosphate + H(+). It participates in aminoacyl-tRNA biosynthesis; selenocysteinyl-tRNA(Sec) biosynthesis; L-seryl-tRNA(Sec) from L-serine and tRNA(Sec): step 1/1. Functionally, catalyzes the attachment of serine to tRNA(Ser). Is also able to aminoacylate tRNA(Sec) with serine, to form the misacylated tRNA L-seryl-tRNA(Sec), which will be further converted into selenocysteinyl-tRNA(Sec). The protein is Serine--tRNA ligase of Shewanella baltica (strain OS185).